Consider the following 238-residue polypeptide: tRNA (guanine-N(7)-)-methyltransferase (238 aa).

Positions 68, 93, 120, and 143 each coordinate S-adenosyl-L-methionine. Asp-143 is an active-site residue. Substrate-binding positions include Lys-147, Asp-179, and 216–219 (TKFE).

This sequence belongs to the class I-like SAM-binding methyltransferase superfamily. TrmB family.

The enzyme catalyses guanosine(46) in tRNA + S-adenosyl-L-methionine = N(7)-methylguanosine(46) in tRNA + S-adenosyl-L-homocysteine. Its pathway is tRNA modification; N(7)-methylguanine-tRNA biosynthesis. In terms of biological role, catalyzes the formation of N(7)-methylguanine at position 46 (m7G46) in tRNA. This chain is tRNA (guanine-N(7)-)-methyltransferase, found in Shewanella sp. (strain MR-4).